We begin with the raw amino-acid sequence, 268 residues long: Ubiquinone biosynthesis protein COQ4 homolog, mitochondrial (268 aa).

Positions 171, 172, 175, and 187 each coordinate Zn(2+).

Belongs to the COQ4 family. As to quaternary structure, component of a multi-subunit COQ enzyme complex. The cofactor is Zn(2+).

It localises to the mitochondrion inner membrane. It carries out the reaction a 4-hydroxy-3-methoxy-5-(all-trans-polyprenyl)benzoate + H(+) = a 2-methoxy-6-(all-trans-polyprenyl)phenol + CO2. The protein operates within cofactor biosynthesis; ubiquinone biosynthesis. Lyase that catalyzes the C1-decarboxylation of 4-hydroxy-3-methoxy-5-(all-trans-polyprenyl)benzoic acid into 2-methoxy-6-(all-trans-polyprenyl)phenol during ubiquinone biosynthesis. The sequence is that of Ubiquinone biosynthesis protein COQ4 homolog, mitochondrial from Drosophila sechellia (Fruit fly).